A 130-amino-acid polypeptide reads, in one-letter code: Small ribosomal subunit protein uS9 (130 aa).

The protein belongs to the universal ribosomal protein uS9 family.

The polypeptide is Small ribosomal subunit protein uS9 (Buchnera aphidicola subsp. Acyrthosiphon pisum (strain 5A)).